Reading from the N-terminus, the 83-residue chain is Protein WFDC9 (83 aa).

A signal peptide spans 1-24 (MKPWIIVLTVSAHGILVFLHVLGS).

Its subcellular location is the secreted. This Mus musculus (Mouse) protein is Protein WFDC9 (Wfdc9).